The primary structure comprises 175 residues: Bifunctional protein PyrR (175 aa).

Residues threonine 40 to arginine 41, aspartate 102 to threonine 110, arginine 135, and valine 159 contribute to the substrate site. A PRPP-binding motif is present at residues valine 98–threonine 110.

It belongs to the purine/pyrimidine phosphoribosyltransferase family. PyrR subfamily. As to quaternary structure, homodimer and homohexamer; in equilibrium.

It catalyses the reaction UMP + diphosphate = 5-phospho-alpha-D-ribose 1-diphosphate + uracil. Regulates transcriptional attenuation of the pyrimidine nucleotide (pyr) operon by binding in a uridine-dependent manner to specific sites on pyr mRNA. This disrupts an antiterminator hairpin in the RNA and favors formation of a downstream transcription terminator, leading to a reduced expression of downstream genes. In terms of biological role, also displays a weak uracil phosphoribosyltransferase activity which is not physiologically significant. The chain is Bifunctional protein PyrR from Staphylococcus haemolyticus (strain JCSC1435).